A 396-amino-acid polypeptide reads, in one-letter code: Probable sugar efflux transporter (396 aa).

The next 12 helical transmembrane spans lie at 15–35 (VVTLAVAAFIFNTTEFVPVGL), 50–70 (VGIMLTIYAWVVALMSLPFML), 81–101 (LICLFVVFIASHVLSFLSWSF), 103–123 (VLVISRIGVAFAHAIFWSITA), 136–156 (AQALSLIATGTALAMVLGLPL), 170–190 (FFAIGIGAFITLLCLIKLLPL), 209–229 (PALMSIYLLTVVVVTAHYTAY), 246–266 (FATALLLLLGGAGIIGSVIFG), 275–295 (ALVSTAIALLLVCLALLLPAA), 299–319 (IHLGVLSIFWGIAMMIIGLGM), 333–353 (VAMALFSGIFNIGIGAGALVG), and 364–384 (MIGYVGAVPAFAALIWSIIIF).

It belongs to the major facilitator superfamily. SotB (TC 2.A.1.2) family.

Its subcellular location is the cell inner membrane. Involved in the efflux of sugars. The physiological role may be the reduction of the intracellular concentration of toxic sugars or sugar metabolites. The chain is Probable sugar efflux transporter from Escherichia coli O17:K52:H18 (strain UMN026 / ExPEC).